Here is an 88-residue protein sequence, read N- to C-terminus: Small ribosomal subunit protein uS17 (88 aa).

It belongs to the universal ribosomal protein uS17 family. Part of the 30S ribosomal subunit.

Functionally, one of the primary rRNA binding proteins, it binds specifically to the 5'-end of 16S ribosomal RNA. The chain is Small ribosomal subunit protein uS17 from Pseudomonas putida (strain ATCC 700007 / DSM 6899 / JCM 31910 / BCRC 17059 / LMG 24140 / F1).